A 290-amino-acid polypeptide reads, in one-letter code: Phosphoribulokinase 1 (290 aa).

12 to 20 (GSSGAGTST) is an ATP binding site.

The protein belongs to the phosphoribulokinase family. As to quaternary structure, homooctamer.

It catalyses the reaction D-ribulose 5-phosphate + ATP = D-ribulose 1,5-bisphosphate + ADP + H(+). It participates in carbohydrate biosynthesis; Calvin cycle. Its activity is regulated as follows. Activated by NADH and inhibited by phosphoenolpyruvate. The chain is Phosphoribulokinase 1 (prkA) from Cereibacter sphaeroides (Rhodobacter sphaeroides).